We begin with the raw amino-acid sequence, 138 residues long: Large ribosomal subunit protein mL54 (138 aa).

The N-terminal 16 residues, 1–16 (MAARRLFGATGSWARW), are a transit peptide targeting the mitochondrion.

The protein belongs to the mitochondrion-specific ribosomal protein mL54 family. As to quaternary structure, component of the mitochondrial ribosome large subunit (39S) which comprises a 16S rRNA and about 50 distinct proteins.

It is found in the mitochondrion. This chain is Large ribosomal subunit protein mL54 (MRPL54), found in Bos taurus (Bovine).